Consider the following 78-residue polypeptide: Conotoxin ArMKLT2-0312 (78 aa).

Residues 1–22 (MKLTCVLIIAVLFLTACQLITA) form the signal peptide. Residues 23–45 (DYSRDKQEYRAVRLRDAMRYSRV) constitute a propeptide that is removed on maturation. Gln-48 carries the post-translational modification Pyrrolidone carboxylic acid. 3 cysteine pairs are disulfide-bonded: Cys-49–Cys-62, Cys-56–Cys-67, and Cys-61–Cys-75.

It belongs to the conotoxin O1 superfamily. In terms of tissue distribution, expressed by the venom duct.

It localises to the secreted. In Conus arenatus (Sand-dusted cone), this protein is Conotoxin ArMKLT2-0312.